The sequence spans 271 residues: Virulence regulon transcriptional activator VirF (271 aa).

Residues 167–265 (ERLQKFMEEN…GCTPSQARLT (99 aa)) enclose the HTH araC/xylS-type domain. DNA-binding regions (H-T-H motif) lie at residues 184–205 (SKFA…GTVY) and 232–255 (IVDI…RRRF).

Transcriptional activator of the Yersinia virulence regulon. In Yersinia enterocolitica serotype O:8 / biotype 1B (strain NCTC 13174 / 8081), this protein is Virulence regulon transcriptional activator VirF (virF).